A 113-amino-acid chain; its full sequence is Non-specific lipid-transfer protein 6 (113 aa).

An N-terminal signal peptide occupies residues 1 to 19 (MRSLLLAVCLVLALHCGEA). Intrachain disulfides connect Cys-23–Cys-70, Cys-33–Cys-47, Cys-48–Cys-95, and Cys-68–Cys-109.

It belongs to the plant LTP family.

Plant non-specific lipid-transfer proteins transfer phospholipids as well as galactolipids across membranes. May play a role in wax or cutin deposition in the cell walls of expanding epidermal cells and certain secretory tissues. The protein is Non-specific lipid-transfer protein 6 (LTP6) of Arabidopsis thaliana (Mouse-ear cress).